The following is a 307-amino-acid chain: tRNA dimethylallyltransferase (307 aa).

Residue 9-16 participates in ATP binding; it reads GPTAIGKT. Substrate is bound at residue 11-16; the sequence is TAIGKT. Interaction with substrate tRNA stretches follow at residues 34 to 37 and 164 to 168; these read DSRQ and QRMMR.

Belongs to the IPP transferase family. Monomer. Mg(2+) is required as a cofactor.

The enzyme catalyses adenosine(37) in tRNA + dimethylallyl diphosphate = N(6)-dimethylallyladenosine(37) in tRNA + diphosphate. Its function is as follows. Catalyzes the transfer of a dimethylallyl group onto the adenine at position 37 in tRNAs that read codons beginning with uridine, leading to the formation of N6-(dimethylallyl)adenosine (i(6)A). This Flavobacterium psychrophilum (strain ATCC 49511 / DSM 21280 / CIP 103535 / JIP02/86) protein is tRNA dimethylallyltransferase.